The chain runs to 176 residues: 3-hydroxydecanoyl-[acyl-carrier-protein] dehydratase (176 aa).

Residue histidine 70 is part of the active site.

Belongs to the thioester dehydratase family. FabA subfamily. As to quaternary structure, homodimer.

The protein localises to the cytoplasm. The enzyme catalyses a (3R)-hydroxyacyl-[ACP] = a (2E)-enoyl-[ACP] + H2O. It catalyses the reaction (3R)-hydroxydecanoyl-[ACP] = (2E)-decenoyl-[ACP] + H2O. The catalysed reaction is (2E)-decenoyl-[ACP] = (3Z)-decenoyl-[ACP]. It participates in lipid metabolism; fatty acid biosynthesis. Its function is as follows. Necessary for the introduction of cis unsaturation into fatty acids. Catalyzes the dehydration of (3R)-3-hydroxydecanoyl-ACP to E-(2)-decenoyl-ACP and then its isomerization to Z-(3)-decenoyl-ACP. Can catalyze the dehydratase reaction for beta-hydroxyacyl-ACPs with saturated chain lengths up to 16:0, being most active on intermediate chain length. This chain is 3-hydroxydecanoyl-[acyl-carrier-protein] dehydratase, found in Alkalilimnicola ehrlichii (strain ATCC BAA-1101 / DSM 17681 / MLHE-1).